We begin with the raw amino-acid sequence, 428 residues long: Probable glucose-6-phosphate isomerase (428 aa).

The active-site Proton donor is Glu269. Active-site residues include His290 and Lys401.

Belongs to the GPI family.

Its subcellular location is the cytoplasm. The catalysed reaction is alpha-D-glucose 6-phosphate = beta-D-fructose 6-phosphate. It functions in the pathway carbohydrate biosynthesis; gluconeogenesis. The protein operates within carbohydrate degradation; glycolysis; D-glyceraldehyde 3-phosphate and glycerone phosphate from D-glucose: step 2/4. Catalyzes the reversible isomerization of glucose-6-phosphate to fructose-6-phosphate. The protein is Probable glucose-6-phosphate isomerase of Natronomonas pharaonis (strain ATCC 35678 / DSM 2160 / CIP 103997 / JCM 8858 / NBRC 14720 / NCIMB 2260 / Gabara) (Halobacterium pharaonis).